The following is a 159-amino-acid chain: Transmembrane protein 42 (159 aa).

The next 4 helical transmembrane spans lie at 37–57 (FWGV…AASA), 59–79 (LAFG…VMAS), 100–120 (IASV…GYVL), and 124–144 (CQEV…TLIH).

The protein resides in the membrane. The sequence is that of Transmembrane protein 42 (TMEM42) from Pongo abelii (Sumatran orangutan).